We begin with the raw amino-acid sequence, 172 residues long: Transcriptional repressor NrdR (172 aa).

The segment at 3 to 34 (CPFCGEADTKVIDSRLVAEGDQVRRRRECLSC) is a zinc-finger region. The ATP-cone domain occupies 49–139 (PRVVKQDGTR…VYRSFQDINE (91 aa)).

The protein belongs to the NrdR family. Zn(2+) serves as cofactor.

In terms of biological role, negatively regulates transcription of bacterial ribonucleotide reductase nrd genes and operons by binding to NrdR-boxes. In Marinobacter nauticus (strain ATCC 700491 / DSM 11845 / VT8) (Marinobacter aquaeolei), this protein is Transcriptional repressor NrdR.